The chain runs to 895 residues: Putative endoplasmic reticulum metallopeptidase 1-B (895 aa).

Residues 1-27 (MSTGIRRRHADEKKNILEKESLQNDET) form a disordered region. Topologically, residues 1–39 (MSTGIRRRHADEKKNILEKESLQNDETQREMEKDISLLR) are cytoplasmic. Residues 9-27 (HADEKKNILEKESLQNDET) are compositionally biased toward basic and acidic residues. A helical transmembrane segment spans residues 40–60 (PAHWNFIGLFFLVLIIGTTFL). Residues 61–374 (HKCLPEPKDP…KPAEYADRKT (314 aa)) lie on the Lumenal side of the membrane. Asn156 is a glycosylation site (N-linked (GlcNAc...) asparagine). Residues His180 and Asp192 each contribute to the Zn(2+) site. Glu226 (proton acceptor) is an active-site residue. Glu227, Glu253, and His329 together coordinate Zn(2+). A helical transmembrane segment spans residues 375–395 (VFFDFLGLFVIIYPLSIAHLV). The Cytoplasmic segment spans residues 396–424 (NMLTICTVIALMSHRFYSKTFITFLALRD). The helical transmembrane segment at 425-445 (YVLTILTIALVLKAMTFMSLF) threads the bilayer. At 446-457 (TYGALRWYTRHW) the chain is on the lumenal side. A helical membrane pass occupies residues 458–478 (LALVAYGLPSVWAGISVQGLL). At 479–489 (TARLAPKAREE) the chain is on the cytoplasmic side. A helical transmembrane segment spans residues 490 to 512 (YGSTLELIHLTLISGILLAFTYY). The Lumenal segment spans residues 513–515 (DIA). The helical transmembrane segment at 516–538 (SGFLFALLLVPAIKSIITYFGAW) threads the bilayer. At 539 to 553 (PTCPTFNTILTLILS) the chain is on the cytoplasmic side. Residues 554–574 (FPGCAMAIYTTEMLLSIFIPI) traverse the membrane as a helical segment. Over 575–584 (MGRSSYNPEP) the chain is Lumenal. The chain crosses the membrane as a helical span at residues 585–605 (AVSFFVAFSAGCIVLSLGGLV). Residues 606-619 (AKSRNSRSSNEAGL) are Cytoplasmic-facing. Residues 620–640 (LELIYNILGVLLVTLTILYVF) form a helical membrane-spanning segment. Over 641 to 895 (SSFWPSPYRF…WNVDQVYKYF (255 aa)) the chain is Lumenal. N-linked (GlcNAc...) asparagine glycosylation is found at Asn679 and Asn796.

It belongs to the peptidase M28 family. Zn(2+) is required as a cofactor.

Its subcellular location is the endoplasmic reticulum membrane. This is Putative endoplasmic reticulum metallopeptidase 1-B from Caenorhabditis elegans.